We begin with the raw amino-acid sequence, 623 residues long: Kelch repeat and BTB domain-containing protein 2 (623 aa).

The BTB domain occupies 31–98 (TDIVLIVEGT…AYTGNLAMND (68 aa)). Residues 133 to 229 (CVRLLSFADL…IRIDALSEVT (97 aa)) form the BACK domain. At Ser300 the chain carries Phosphoserine. Kelch repeat units lie at residues 317-380 (DIYI…CCEG), 381-429 (HIYA…VVHD), 431-469 (IYVM…AFGD), 470-529 (KIFY…RAVV), and 535-581 (CVFM…DFRC).

Component of the BCR(KBTBD2) E3 ubiquitin ligase complex, at least composed of CUL3, KBTBD2 and RBX1. Interacts (via the BTB domain) with CUL3.

It functions in the pathway protein modification; protein ubiquitination. Its function is as follows. Substrate-specific adapter of a BCR (BTB-CUL3-RBX1) E3 ubiquitin ligase complex that acts as a regulator of the insulin signaling pathway, modulating insulin sensitivity by limiting PIK3R1/p85alpha abundance in adipocytes. Targets PIK3R1, the regulatory subunit of phosphatidylinositol 3-kinase (PI3K), for 'Lys-48'-linked polyubiquitination and proteasome-mediated degradation. In Pongo abelii (Sumatran orangutan), this protein is Kelch repeat and BTB domain-containing protein 2 (KBTBD2).